Reading from the N-terminus, the 440-residue chain is Tubulin beta-3 chain (440 aa).

Residues glutamine 2, glutamate 60, serine 129, glycine 133, threonine 134, glycine 135, asparagine 195, and asparagine 217 each coordinate GTP. Position 60 (glutamate 60) interacts with Mg(2+). The disordered stretch occupies residues 411–440; that stretch reads SEYQQYQDATADEEGEYEDEEEEEPEHGYE. The span at 420–440 shows a compositional bias: acidic residues; the sequence is TADEEGEYEDEEEEEPEHGYE.

The protein belongs to the tubulin family. As to quaternary structure, dimer of alpha and beta chains. A typical microtubule is a hollow water-filled tube with an outer diameter of 25 nm and an inner diameter of 15 nM. Alpha-beta heterodimers associate head-to-tail to form protofilaments running lengthwise along the microtubule wall with the beta-tubulin subunit facing the microtubule plus end conferring a structural polarity. Microtubules usually have 13 protofilaments but different protofilament numbers can be found in some organisms and specialized cells. Requires Mg(2+) as cofactor.

Its subcellular location is the cytoplasm. It is found in the cytoskeleton. Its function is as follows. Tubulin is the major constituent of microtubules, a cylinder consisting of laterally associated linear protofilaments composed of alpha- and beta-tubulin heterodimers. Microtubules grow by the addition of GTP-tubulin dimers to the microtubule end, where a stabilizing cap forms. Below the cap, tubulin dimers are in GDP-bound state, owing to GTPase activity of alpha-tubulin. The polypeptide is Tubulin beta-3 chain (TUBB3) (Pisum sativum (Garden pea)).